Consider the following 424-residue polypeptide: Serine hydroxymethyltransferase (424 aa).

Residues Leu126 and 130–132 each bind (6S)-5,6,7,8-tetrahydrofolate; that span reads GHL. Lys235 is subject to N6-(pyridoxal phosphate)lysine. A (6S)-5,6,7,8-tetrahydrofolate-binding site is contributed by 359-361; the sequence is SPF.

The protein belongs to the SHMT family. In terms of assembly, homodimer. Pyridoxal 5'-phosphate serves as cofactor.

Its subcellular location is the cytoplasm. The catalysed reaction is (6R)-5,10-methylene-5,6,7,8-tetrahydrofolate + glycine + H2O = (6S)-5,6,7,8-tetrahydrofolate + L-serine. Its pathway is one-carbon metabolism; tetrahydrofolate interconversion. It participates in amino-acid biosynthesis; glycine biosynthesis; glycine from L-serine: step 1/1. Its function is as follows. Catalyzes the reversible interconversion of serine and glycine with tetrahydrofolate (THF) serving as the one-carbon carrier. This reaction serves as the major source of one-carbon groups required for the biosynthesis of purines, thymidylate, methionine, and other important biomolecules. Also exhibits THF-independent aldolase activity toward beta-hydroxyamino acids, producing glycine and aldehydes, via a retro-aldol mechanism. The protein is Serine hydroxymethyltransferase of Prochlorococcus marinus (strain MIT 9303).